The primary structure comprises 244 residues: Small ribosomal subunit protein eS4 (244 aa).

The S4 RNA-binding domain maps to 43 to 106; that stretch reads LPLLLVVRDV…DENYLVLFDE (64 aa).

It belongs to the eukaryotic ribosomal protein eS4 family.

This is Small ribosomal subunit protein eS4 from Methanococcus maripaludis (strain C5 / ATCC BAA-1333).